A 127-amino-acid chain; its full sequence is MSYRKLGRTSSQRKALLRDLTTELIVNEKIVTTEARAKEVRSTTEKMITLGKRGDLHARRQAAAFVRNVVADVTEDGEDVKVSSALQKLFADLAPRYADRKGGYTRIYKTMPRRGDGAPMVVLELVD.

Belongs to the bacterial ribosomal protein bL17 family. Part of the 50S ribosomal subunit. Contacts protein L32.

The protein is Large ribosomal subunit protein bL17 of Pediococcus pentosaceus (strain ATCC 25745 / CCUG 21536 / LMG 10740 / 183-1w).